The sequence spans 804 residues: Phenylalanine--tRNA ligase beta subunit (804 aa).

Positions 40-155 (GEGIKGVVIG…GDAETGADAL (116 aa)) constitute a tRNA-binding domain. The region spanning 409-484 (IKENVIRLSV…RLYGYDNIPS (76 aa)) is the B5 domain. Mg(2+) contacts are provided by Asp462, Asp468, Glu471, and Glu472. The 94-residue stretch at 710-803 (PKYPSVTRDI…LEDKYQAVLR (94 aa)) folds into the FDX-ACB domain.

It belongs to the phenylalanyl-tRNA synthetase beta subunit family. Type 1 subfamily. As to quaternary structure, tetramer of two alpha and two beta subunits. The cofactor is Mg(2+).

The protein resides in the cytoplasm. It carries out the reaction tRNA(Phe) + L-phenylalanine + ATP = L-phenylalanyl-tRNA(Phe) + AMP + diphosphate + H(+). The chain is Phenylalanine--tRNA ligase beta subunit from Bacillus licheniformis (strain ATCC 14580 / DSM 13 / JCM 2505 / CCUG 7422 / NBRC 12200 / NCIMB 9375 / NCTC 10341 / NRRL NRS-1264 / Gibson 46).